An 89-amino-acid polypeptide reads, in one-letter code: Gamma-bungarotoxin (89 aa).

An N-terminal signal peptide occupies residues methionine 1–threonine 21. 5 disulfides stabilise this stretch: cysteine 24-cysteine 45, cysteine 27-cysteine 32, cysteine 38-cysteine 66, cysteine 70-cysteine 81, and cysteine 82-cysteine 87. The Cell attachment site signature appears at arginine 54 to aspartate 56.

It belongs to the three-finger toxin family. Ancestral subfamily. Orphan group V sub-subfamily. In terms of tissue distribution, expressed by the venom gland.

Its subcellular location is the secreted. Exhibits M2 muscarinic acetylcholine receptor (CHRM2)-blocking activity, but has a weak binding activity toward nicotinic AChR. Moreover, it inhibits collagen-induced platelet aggregation. This Bungarus multicinctus (Many-banded krait) protein is Gamma-bungarotoxin.